A 59-amino-acid chain; its full sequence is MTGTTLFDRRMLEALVCPVTQAGLAYDADRQELISKQARLAFPIRDGIPIMLVSEAREL.

It belongs to the UPF0434 family.

This Cereibacter sphaeroides (strain ATCC 17023 / DSM 158 / JCM 6121 / CCUG 31486 / LMG 2827 / NBRC 12203 / NCIMB 8253 / ATH 2.4.1.) (Rhodobacter sphaeroides) protein is UPF0434 protein RHOS4_00640.